We begin with the raw amino-acid sequence, 325 residues long: Interferon regulatory factor 1 (325 aa).

Residues R5–P113 constitute a DNA-binding region (IRF tryptophan pentad repeat). At K78 the chain carries N6-acetyllysine. A disordered region spans residues E92 to T165. The segment covering G141–L157 has biased composition (polar residues). Glycyl lysine isopeptide (Lys-Gly) (interchain with G-Cter in SUMO) cross-links involve residues K275 and K299.

It belongs to the IRF family. In terms of assembly, monomer. Homodimer. Interacts with EP300. Interacts with MYD88. Interacts with PIAS3. Interacts with SPOP. Post-translationally, phosphorylated by CK2 and this positively regulates its activity. In terms of processing, sumoylation represses the transcriptional activity and displays enhanced resistance to protein degradation. Sumoylated by UBE2I/UBC9 and SUMO1. Inactivates the tumor suppressor activity. Elevated levels in tumor cells. Major site is Lys-275. Sumoylation is enhanced by PIAS3. Desumoylated by SENP1 in tumor cells and appears to compete with ubiquitination on C-terminal sites. Ubiquitinated in a SPOP-depedent manner. Appears to compete with sumoylation on C-terminal sites.

Its subcellular location is the nucleus. It is found in the cytoplasm. With respect to regulation, activated by MYD88. Its function is as follows. Transcriptional regulator which displays a remarkable functional diversity in the regulation of cellular responses. Regulates transcription of IFN and IFN-inducible genes, host response to viral and bacterial infections, regulation of many genes expressed during hematopoiesis, inflammation, immune responses and cell proliferation and differentiation, regulation of the cell cycle and induction of growth arrest and programmed cell death following DNA damage. Stimulates both innate and acquired immune responses through the activation of specific target genes and can act as a transcriptional activator and repressor regulating target genes by binding to an interferon-stimulated response element (ISRE) in their promoters. Has an essentail role in IFNG-dependent immunity to mycobacteria. Competes with the transcriptional repressor ZBED2 for binding to a common consensus sequence in gene promoters. Its target genes for transcriptional activation activity include: genes involved in anti-viral response, such as IFN-alpha/beta, RIGI, TNFSF10/TRAIL, ZBP1, OAS1/2, PIAS1/GBP, EIF2AK2/PKR and RSAD2/viperin; antibacterial response, such as GBP2, GBP5 and NOS2/INOS; anti-proliferative response, such as p53/TP53, LOX and CDKN1A; apoptosis, such as BBC3/PUMA, CASP1, CASP7 and CASP8; immune response, such as IL7, IL12A/B and IL15, PTGS2/COX2 and CYBB; DNA damage responses and DNA repair, such as POLQ/POLH; MHC class I expression, such as TAP1, PSMB9/LMP2, PSME1/PA28A, PSME2/PA28B and B2M and MHC class II expression, such as CIITA; metabolic enzymes, such as ACOD1/IRG1. Represses genes involved in anti-proliferative response, such as BIRC5/survivin, CCNB1, CCNE1, CDK1, CDK2 and CDK4 and in immune response, such as FOXP3, IL4, ANXA2 and TLR4. Stimulates p53/TP53-dependent transcription through enhanced recruitment of EP300 leading to increased acetylation of p53/TP53. Plays an important role in immune response directly affecting NK maturation and activity, macrophage production of IL12, Th1 development and maturation of CD8+ T-cells. Also implicated in the differentiation and maturation of dendritic cells and in the suppression of regulatory T (Treg) cells development. Acts as a tumor suppressor and plays a role not only in antagonism of tumor cell growth but also in stimulating an immune response against tumor cells. The chain is Interferon regulatory factor 1 (IRF1) from Homo sapiens (Human).